The primary structure comprises 504 residues: MEEKIMTNNSPWILTSSTTTTTTILLSLLFTIFIILRRNKSSSSKMVWPTGPKTLPIIGNMNILGGTALHVVLHNLAKTYGNVMTIWIGSWRPVIVVSDIDRAWEVLVNKSSDYSARDMPEITKLATADWKTISSSDSGPFWTNLRKGLQNVALSPQNLSSQSKFQERDIIKTIQNLKEEAKMNNGIVKPLDHLKKAMVRLISRLIYGQDFDNDEYVEEMHHTIEELIRVSGYARLAEAFYYAKYLPSHKKAVREVLQANQRVQNLVRPLLSLNSPTNTYLHFLRSQNYEDEVIIFAIFEAYLLGVDSTSSTTAWALAYLIREPNVQEKLYEELKNFTNDNDRKMVKFEDLNKLQYLQAVVKETMRMKPIAPLAIPHKACRETSLMGRKVNQGTRVMVNIYALHHNQNVWKEPYKFNPERFLQKNQDGVDGKAMEQSLLPFSAGMRICAGMELGKLQFSFALANLVNAFKWSCVSDGVFPDMSDQLGFVLLMKTPLEAGIVPRM.

Residues 16–36 traverse the membrane as a helical segment; it reads SSTTTTTTILLSLLFTIFIIL. Residue cysteine 448 participates in heme binding.

This sequence belongs to the cytochrome P450 family. Heme serves as cofactor. Expressed in roots and at lower levels in stems, leaves and plantlets.

It is found in the endoplasmic reticulum membrane. The catalysed reaction is (S)-cheilanthifoline + reduced [NADPH--hemoprotein reductase] + O2 = (S)-stylopine + oxidized [NADPH--hemoprotein reductase] + 2 H2O + H(+). It catalyses the reaction (S)-tetrahydrocolumbamine + reduced [NADPH--hemoprotein reductase] + O2 = (S)-canadine + oxidized [NADPH--hemoprotein reductase] + 2 H2O + H(+). The enzyme catalyses (S)-scoulerine + reduced [NADPH--hemoprotein reductase] + O2 = (S)-nandinine + oxidized [NADPH--hemoprotein reductase] + 2 H2O + H(+). Methylenedioxy bridge-forming cytochrome P450 involved in the biosynthesis of isoquinoline alkaloids. Converts (S)-cheilanthifoline to (S)-stylopine, (S)-scoulerine to (S)-nandinine and (S)-tetrahydrocolumbamine to (S)-canadine. Can be involved in both sanguinarine and berberine biosynthesis. Catalyzes an oxidative reaction that does not incorporate oxygen into the product. The sequence is that of Trifunctional (S)-stylopine synthase/(S)-nandinine synthase/(S)-canadine synthase from Argemone mexicana (Mexican prickly poppy).